Here is a 468-residue protein sequence, read N- to C-terminus: Cysteine--tRNA ligase (468 aa).

A Zn(2+)-binding site is contributed by C28. Positions 30 to 40 match the 'HIGH' region motif; the sequence is PTVYNYIHIGN. 3 residues coordinate Zn(2+): C212, H237, and E241. Residues 271–275 carry the 'KMSKS' region motif; the sequence is KMSKS. K274 serves as a coordination point for ATP.

The protein belongs to the class-I aminoacyl-tRNA synthetase family. As to quaternary structure, monomer. Zn(2+) is required as a cofactor.

Its subcellular location is the cytoplasm. The enzyme catalyses tRNA(Cys) + L-cysteine + ATP = L-cysteinyl-tRNA(Cys) + AMP + diphosphate. The protein is Cysteine--tRNA ligase of Lacticaseibacillus casei (strain BL23) (Lactobacillus casei).